The primary structure comprises 198 residues: Superoxide dismutase [Fe] (198 aa).

Fe cation-binding residues include histidine 27, histidine 74, aspartate 157, and histidine 161.

Belongs to the iron/manganese superoxide dismutase family. In terms of assembly, homodimer. Fe cation serves as cofactor.

It catalyses the reaction 2 superoxide + 2 H(+) = H2O2 + O2. Destroys superoxide anion radicals which are normally produced within the cells and which are toxic to biological systems. The sequence is that of Superoxide dismutase [Fe] (sodB) from Pseudomonas putida (strain ATCC 47054 / DSM 6125 / CFBP 8728 / NCIMB 11950 / KT2440).